The chain runs to 276 residues: UPF0328 protein ECU03_0010 (276 aa).

2 disordered regions span residues 1–132 (MAAP…PIIS) and 156–176 (SFCQNTRDSPSLPPQRPNMVH). Basic and acidic residues predominate over residues 106-126 (HTEGCHTHEANPEPNTKHTET).

This sequence belongs to the UPF0328 family.

The protein is UPF0328 protein ECU03_0010 of Encephalitozoon cuniculi (strain GB-M1) (Microsporidian parasite).